The chain runs to 861 residues: E3 ubiquitin-protein ligase SH3RF1 (861 aa).

The RING-type zinc finger occupies Cys-12–Arg-53. 2 SH3 domains span residues Pro-132 to Pro-191 and Gln-194 to Ala-257. The interval Ser-268–Ser-319 is disordered. A compositionally biased stretch (low complexity) spans Gly-273–Ser-285. The span at Phe-301–Arg-317 shows a compositional bias: polar residues. One can recognise an SH3 3 domain in the interval Thr-435 to Arg-496. Residues Asn-684–Ser-731 form a disordered region. Residues Lys-689–Gly-700 are compositionally biased toward basic and acidic residues. The 60-residue stretch at Arg-802 to Ile-861 folds into the SH3 4 domain.

Belongs to the SH3RF family. Autoubiquitinated. Ubiquitinated by SH3RF2, leading to proteasome-mediated degradation.

The protein resides in the cytoplasm. The protein localises to the perinuclear region. It is found in the cell projection. Its subcellular location is the lamellipodium. It localises to the golgi apparatus. The protein resides in the trans-Golgi network. It catalyses the reaction S-ubiquitinyl-[E2 ubiquitin-conjugating enzyme]-L-cysteine + [acceptor protein]-L-lysine = [E2 ubiquitin-conjugating enzyme]-L-cysteine + N(6)-ubiquitinyl-[acceptor protein]-L-lysine.. Its pathway is protein modification; protein ubiquitination. In terms of biological role, has E3 ubiquitin-protein ligase activity. In the absence of an external substrate, it can catalyze self-ubiquitination. Acts as a scaffold protein that contributes to the effective activation of the JNK signaling pathway. This is E3 ubiquitin-protein ligase SH3RF1 (sh3rf1) from Xenopus tropicalis (Western clawed frog).